Reading from the N-terminus, the 147-residue chain is Large ribosomal subunit protein uL11 (147 aa).

This sequence belongs to the universal ribosomal protein uL11 family. As to quaternary structure, part of the ribosomal stalk of the 50S ribosomal subunit. Interacts with L10 and the large rRNA to form the base of the stalk. L10 forms an elongated spine to which L12 dimers bind in a sequential fashion forming a multimeric L10(L12)X complex. One or more lysine residues are methylated.

Forms part of the ribosomal stalk which helps the ribosome interact with GTP-bound translation factors. This is Large ribosomal subunit protein uL11 from Bacteroides thetaiotaomicron (strain ATCC 29148 / DSM 2079 / JCM 5827 / CCUG 10774 / NCTC 10582 / VPI-5482 / E50).